Consider the following 428-residue polypeptide: Cysteine synthase 2 (428 aa).

The helical transmembrane segment at 7 to 27 threads the bilayer; the sequence is IYIGSAFVAGVVLTIAFKDLF. Residue Lys-106 is modified to N6-(pyridoxal phosphate)lysine. Pyridoxal 5'-phosphate contacts are provided by residues 260-264 and Ser-367; that span reads GTGGT.

This sequence belongs to the cysteine synthase/cystathionine beta-synthase family. Requires pyridoxal 5'-phosphate as cofactor.

The protein resides in the mitochondrion outer membrane. It catalyses the reaction O-acetyl-L-serine + hydrogen sulfide = L-cysteine + acetate. In terms of biological role, putative cysteine synthase that catalyzes the conversion of O-acetyl-L-serine (OAS) into cysteine, the last step in the cysteine biosynthesis pathway. However, in contrast to cysteine synthase cysB, this CS-like protein seems not to function in cysteine biosynthesis. This Emericella nidulans (strain FGSC A4 / ATCC 38163 / CBS 112.46 / NRRL 194 / M139) (Aspergillus nidulans) protein is Cysteine synthase 2.